Reading from the N-terminus, the 433-residue chain is MSKIVKVLGREIIDSRGNPTVEAEVHLEGGFVGMAAAPSGASTGSREALELRDGDKARFLGKGVLKAIEAVNGAIADALVGKDAKDQAAIDAIMIELDGTENKSKFGANAILAVSLANAKAAAASKGMPLYEHIAELNGTAGQFSMPLPMMNIINGGEHADNNVDIQEFMIQPVGAKTLKEAVRMGAEVFHNLAKVLKSKGYNTAVGDEGGFAPNLKSNAEALEVIAEAVAAAGYVLGKDVTLAMDCAASEFFDKEAGIYNMKGEGKTFTSEEFNHYLAGLVEQFPIVSIEDGLDESDWAGFAHQTQLLGDKIQLVGDDLFVTNTKILAEGIEKGIANSILIKFNQIGSLTETLAAIKMAKDAGYTAVISHRSGETEDATIADLAVGTAAGQIKTGSMSRSDRVAKYNQLIRIEEALGERAPFNGLKEVKGQA.

(2R)-2-phosphoglycerate is bound at residue Gln-167. The active-site Proton donor is the Glu-209. Mg(2+) is bound by residues Asp-246, Glu-291, and Asp-318. Lys-343, Arg-372, Ser-373, and Lys-394 together coordinate (2R)-2-phosphoglycerate. The Proton acceptor role is filled by Lys-343.

This sequence belongs to the enolase family. As to quaternary structure, component of the RNA degradosome, a multiprotein complex involved in RNA processing and mRNA degradation. Requires Mg(2+) as cofactor.

It localises to the cytoplasm. The protein localises to the secreted. The protein resides in the cell surface. The catalysed reaction is (2R)-2-phosphoglycerate = phosphoenolpyruvate + H2O. Its pathway is carbohydrate degradation; glycolysis; pyruvate from D-glyceraldehyde 3-phosphate: step 4/5. Functionally, catalyzes the reversible conversion of 2-phosphoglycerate (2-PG) into phosphoenolpyruvate (PEP). It is essential for the degradation of carbohydrates via glycolysis. The polypeptide is Enolase (Vibrio vulnificus (strain YJ016)).